Consider the following 218-residue polypeptide: Ribonuclease T (218 aa).

The Exonuclease domain maps to 24-198; sequence VIIDVETAGF…YDAERTAELF (175 aa). Positions 27, 29, 185, and 190 each coordinate Mg(2+). H185 serves as the catalytic Proton donor/acceptor.

This sequence belongs to the RNase T family. As to quaternary structure, homodimer. Requires Mg(2+) as cofactor.

Its function is as follows. Trims short 3' overhangs of a variety of RNA species, leaving a one or two nucleotide 3' overhang. Responsible for the end-turnover of tRNA: specifically removes the terminal AMP residue from uncharged tRNA (tRNA-C-C-A). Also appears to be involved in tRNA biosynthesis. The protein is Ribonuclease T of Histophilus somni (strain 129Pt) (Haemophilus somnus).